The sequence spans 648 residues: p-hydroxybenzoic acid efflux pump subunit AaeB (648 aa).

11 helical membrane-spanning segments follow: residues 11-31 (FACK…YFGL), 41-61 (AALV…SGAI), 65-87 (GWLR…MLLI), 91-110 (LLMI…LSSL), 125-145 (TALI…QLAL), 150-170 (EIVL…PRSV), 369-389 (LFWL…IAVV), 406-426 (FLMG…LILP), 430-450 (QSLV…GMAV), 458-478 (MGTL…GFPI), and 481-501 (FVDS…VLLV).

Belongs to the aromatic acid exporter ArAE (TC 2.A.85) family.

It is found in the cell inner membrane. Functionally, forms an efflux pump with AaeA. Could function as a metabolic relief valve, allowing to eliminate certain compounds when they accumulate to high levels in the cell. The sequence is that of p-hydroxybenzoic acid efflux pump subunit AaeB from Edwardsiella ictaluri (strain 93-146).